The following is a 124-amino-acid chain: Small ribosomal subunit protein uS12 (124 aa).

The segment at 1–25 (MATINQLVRKPRQATTYKSASPALD) is disordered. Aspartate 89 carries the post-translational modification 3-methylthioaspartic acid.

It belongs to the universal ribosomal protein uS12 family. As to quaternary structure, part of the 30S ribosomal subunit. Contacts proteins S8 and S17. May interact with IF1 in the 30S initiation complex.

Functionally, with S4 and S5 plays an important role in translational accuracy. Interacts with and stabilizes bases of the 16S rRNA that are involved in tRNA selection in the A site and with the mRNA backbone. Located at the interface of the 30S and 50S subunits, it traverses the body of the 30S subunit contacting proteins on the other side and probably holding the rRNA structure together. The combined cluster of proteins S8, S12 and S17 appears to hold together the shoulder and platform of the 30S subunit. In Xanthomonas campestris pv. campestris (strain 8004), this protein is Small ribosomal subunit protein uS12.